The sequence spans 349 residues: NADH-quinone oxidoreductase subunit H (349 aa).

The next 8 helical transmembrane spans lie at 14–34 (LLVW…GCVA), 85–105 (GLFL…WAVI), 120–140 (LLYI…AGWA), 164–184 (MGFA…VDIV), 196–216 (ILSW…ISGV), 243–263 (GMAF…VAAL), 285–305 (AGGF…FLWF), and 324–344 (VFIP…FSPL).

It belongs to the complex I subunit 1 family. In terms of assembly, NDH-1 is composed of 14 different subunits. Subunits NuoA, H, J, K, L, M, N constitute the membrane sector of the complex.

The protein localises to the cell inner membrane. It catalyses the reaction a quinone + NADH + 5 H(+)(in) = a quinol + NAD(+) + 4 H(+)(out). Its function is as follows. NDH-1 shuttles electrons from NADH, via FMN and iron-sulfur (Fe-S) centers, to quinones in the respiratory chain. The immediate electron acceptor for the enzyme in this species is believed to be ubiquinone. Couples the redox reaction to proton translocation (for every two electrons transferred, four hydrogen ions are translocated across the cytoplasmic membrane), and thus conserves the redox energy in a proton gradient. This subunit may bind ubiquinone. The protein is NADH-quinone oxidoreductase subunit H of Chromobacterium violaceum (strain ATCC 12472 / DSM 30191 / JCM 1249 / CCUG 213 / NBRC 12614 / NCIMB 9131 / NCTC 9757 / MK).